The primary structure comprises 422 residues: Probable ornithine aminotransferase, mitochondrial (422 aa).

At K273 the chain carries N6-(pyridoxal phosphate)lysine.

The protein belongs to the class-III pyridoxal-phosphate-dependent aminotransferase family. The cofactor is pyridoxal 5'-phosphate.

Its subcellular location is the mitochondrion matrix. It carries out the reaction a 2-oxocarboxylate + L-ornithine = L-glutamate 5-semialdehyde + an L-alpha-amino acid. Its pathway is amino-acid biosynthesis; L-proline biosynthesis; L-glutamate 5-semialdehyde from L-ornithine: step 1/1. The sequence is that of Probable ornithine aminotransferase, mitochondrial from Caenorhabditis elegans.